A 255-amino-acid polypeptide reads, in one-letter code: Microfibril-associated glycoprotein 4 (255 aa).

The N-terminal stretch at 1 to 20 is a signal peptide; sequence MEALLVLPLLLLLSAGPCAP. The Cell attachment site motif lies at 26–28; sequence RGD. The 224-residue stretch at 32–255 folds into the Fibrinogen C-terminal domain; it reads KSCLQLPLDC…KRTEMKIRRA (224 aa). Asparagine 87 and asparagine 137 each carry an N-linked (GlcNAc...) asparagine glycan.

Homodimer. Can also form higher oligomers. Interacts with FBN1, FBN2 and LOX. Interacts with COL1A1 in a Ca (2+)-dependent manner. Interacts with ELN in a Ca (2+)-dependent manner; this interaction promotes ELN self-assembly.

The protein localises to the secreted. Its subcellular location is the extracellular space. It is found in the extracellular matrix. In terms of biological role, could be involved in calcium-dependent cell adhesion or intercellular interactions. May contribute to the elastic fiber assembly and/or maintenance. This is Microfibril-associated glycoprotein 4 (MFAP4) from Bos taurus (Bovine).